We begin with the raw amino-acid sequence, 199 residues long: Calcium-binding protein CAST (199 aa).

A compositionally biased stretch (basic and acidic residues) spans 1-13; sequence MGSVQDENKDEFK. The tract at residues 1-31 is disordered; the sequence is MGSVQDENKDEFKQSLTRGKLKPSSSSSFRL. 4 consecutive EF-hand domains span residues 36–71, 75–110, 125–160, and 163–198; these read LNSI…LGLD, SEIE…VFFG, QDES…LGLP, and SEID…VIVP. Ca(2+) contacts are provided by Asp49, Asn51, Asp53, and Glu60. Positions 138, 140, 142, 149, 178, 180, 182, and 187 each coordinate Ca(2+).

In terms of biological role, not known. Probably binds 3 calcium ions. The sequence is that of Calcium-binding protein CAST from Solanum tuberosum (Potato).